We begin with the raw amino-acid sequence, 190 residues long: Probable nicotinate-nucleotide adenylyltransferase (190 aa).

It belongs to the NadD family.

It carries out the reaction nicotinate beta-D-ribonucleotide + ATP + H(+) = deamido-NAD(+) + diphosphate. The protein operates within cofactor biosynthesis; NAD(+) biosynthesis; deamido-NAD(+) from nicotinate D-ribonucleotide: step 1/1. Functionally, catalyzes the reversible adenylation of nicotinate mononucleotide (NaMN) to nicotinic acid adenine dinucleotide (NaAD). The polypeptide is Probable nicotinate-nucleotide adenylyltransferase (Borrelia turicatae (strain 91E135)).